Here is a 387-residue protein sequence, read N- to C-terminus: uncharacterized protein (387 aa).

Disordered regions lie at residues 1 to 126, 138 to 169, and 275 to 298; these read MDGR…GDDE, GNQGGLVPGLAPIPSENENGKNDIEKNNRNEE, and SSIFSDSQAVTTDDEGISSTAGNK. Residues 32 to 45 show a composition bias toward basic and acidic residues; that stretch reads SSDHRTSNSAESKK. Composition is skewed to polar residues over residues 49–63 and 78–93; these read SGKSISDLGISNNDN and DLSSRSTETSDNSKGT. Basic and acidic residues predominate over residues 155-169; it reads ENGKNDIEKNNRNEE. The span at 275 to 296 shows a compositional bias: polar residues; that stretch reads SSIFSDSQAVTTDDEGISSTAG.

Belongs to the ThrE exporter (TC 2.A.79) family.

This is an uncharacterized protein from Saccharomyces cerevisiae (strain ATCC 204508 / S288c) (Baker's yeast).